A 260-amino-acid polypeptide reads, in one-letter code: Indole-3-glycerol phosphate synthase (260 aa).

Belongs to the TrpC family.

The catalysed reaction is 1-(2-carboxyphenylamino)-1-deoxy-D-ribulose 5-phosphate + H(+) = (1S,2R)-1-C-(indol-3-yl)glycerol 3-phosphate + CO2 + H2O. The protein operates within amino-acid biosynthesis; L-tryptophan biosynthesis; L-tryptophan from chorismate: step 4/5. The chain is Indole-3-glycerol phosphate synthase from Staphylococcus haemolyticus (strain JCSC1435).